The primary structure comprises 353 residues: 2-Hydroxyacid oxidase 2 (353 aa).

The FMN hydroxy acid dehydrogenase domain maps to Pro-2 to Leu-353. Residues Pro-77–Gly-79, Ser-106, and Gln-128 contribute to the FMN site. A 2-oxocarboxylate is bound at residue Tyr-130. Thr-156 is a binding site for FMN. Arg-165 lines the a 2-oxocarboxylate pocket. Residue Lys-224 coordinates FMN. Residue His-248 is the Proton acceptor of the active site. Arg-251 is an a 2-oxocarboxylate binding site. FMN is bound by residues Asp-279–Arg-283 and Gly-302–Arg-303. Residues Ser-351–Leu-353 carry the Microbody targeting signal motif.

Belongs to the FMN-dependent alpha-hydroxy acid dehydrogenase family. In terms of assembly, homotetramer. FMN serves as cofactor.

The protein resides in the peroxisome. The enzyme catalyses a (2S)-2-hydroxycarboxylate + O2 = a 2-oxocarboxylate + H2O2. The catalysed reaction is 2-hydroxyhexadecanoate + O2 = 2-oxohexadecanoate + H2O2. It carries out the reaction 2-hydroxyoctanoate + O2 = 2-oxooctanoate + H2O2. Its pathway is lipid metabolism; fatty acid metabolism. In terms of biological role, oxidase that catalyzes the oxidation of medium and long chain hydroxyacids such as 2-hydroxyhexadecanoate and 2-hydroxyoctanoate, to the correspondong 2-oxoacids. Its role in the oxidation of 2-hydroxy fatty acids may contribute to the general pathway of fatty acid alpha-oxidation. Active in vitro with the artificial electron acceptor 2,6-dichlorophenolindophenol (DCIP), but O2 is believed to be the physiological electron acceptor, leading to the production of H2O2. This Bos taurus (Bovine) protein is 2-Hydroxyacid oxidase 2 (HAO2).